The primary structure comprises 270 residues: Putative pyruvate, phosphate dikinase regulatory protein (270 aa).

149-156 contributes to the ADP binding site; that stretch reads GVSRTSKT.

The protein belongs to the pyruvate, phosphate/water dikinase regulatory protein family. PDRP subfamily.

It catalyses the reaction N(tele)-phospho-L-histidyl/L-threonyl-[pyruvate, phosphate dikinase] + ADP = N(tele)-phospho-L-histidyl/O-phospho-L-threonyl-[pyruvate, phosphate dikinase] + AMP + H(+). The enzyme catalyses N(tele)-phospho-L-histidyl/O-phospho-L-threonyl-[pyruvate, phosphate dikinase] + phosphate + H(+) = N(tele)-phospho-L-histidyl/L-threonyl-[pyruvate, phosphate dikinase] + diphosphate. Its function is as follows. Bifunctional serine/threonine kinase and phosphorylase involved in the regulation of the pyruvate, phosphate dikinase (PPDK) by catalyzing its phosphorylation/dephosphorylation. The protein is Putative pyruvate, phosphate dikinase regulatory protein of Thermoanaerobacter pseudethanolicus (strain ATCC 33223 / 39E) (Clostridium thermohydrosulfuricum).